Consider the following 444-residue polypeptide: Ribosome biogenesis protein WDR12 homolog (444 aa).

A ubiquitin-like (UBL) domain region spans residues 7–87; it reads VLVKFVTKLP…ESTLEVEYVP (81 aa). A disordered region spans residues 91–123; that stretch reads PPQQKNSTPHDDWVSSVDGSRCAPASSSGGSPS. WD repeat units follow at residues 105–148, 150–191, and 203–242; these read SSVD…VASV, AHAG…EEDA, and GHEDGVEAVAASPSGRRFASCGWDGKLLVWEGGEQLRWAA. A disordered region spans residues 243-264; it reads GTAEASKKKRKTGTANGSAAAG. WD repeat units lie at residues 272–310, 312–352, 360–400, and 403–444; these read GHLHCVSSVAWPAENSLFSGGWDHSVRRWDVSSGAAADT, NGSK…GSDA, AHGG…PLGM, and HHTD…YIVS.

The protein belongs to the WD repeat WDR12/YTM1 family.

The protein resides in the nucleus. Its subcellular location is the nucleolus. It localises to the nucleoplasm. Its function is as follows. Required for maturation of ribosomal RNAs and formation of the large ribosomal subunit. The protein is Ribosome biogenesis protein WDR12 homolog of Chlamydomonas reinhardtii (Chlamydomonas smithii).